A 308-amino-acid chain; its full sequence is Elongation factor Ts (308 aa).

The interval threonine 80–valine 83 is involved in Mg(2+) ion dislocation from EF-Tu.

The protein belongs to the EF-Ts family.

The protein resides in the cytoplasm. Functionally, associates with the EF-Tu.GDP complex and induces the exchange of GDP to GTP. It remains bound to the aminoacyl-tRNA.EF-Tu.GTP complex up to the GTP hydrolysis stage on the ribosome. This Methylobacterium radiotolerans (strain ATCC 27329 / DSM 1819 / JCM 2831 / NBRC 15690 / NCIMB 10815 / 0-1) protein is Elongation factor Ts.